The chain runs to 905 residues: Chitin synthase 3B (905 aa).

Residues 1–10 (MAYNGRDQEY) show a composition bias toward basic and acidic residues. The disordered stretch occupies residues 1–136 (MAYNGRDQEY…GGGGGLGRSK (136 aa)). The span at 81-93 (GPTGYGDTGGSFG) shows a compositional bias: gly residues. Asn536 is a glycosylation site (N-linked (GlcNAc...) asparagine). Residues 562–584 (MFFLHIQLIYTTLNTMFAWFSLG) traverse the membrane as a helical segment. N-linked (GlcNAc...) asparagine glycosylation is present at Asn601. The next 6 helical transmembrane spans lie at 618–638 (IVNA…FILA), 653–673 (SFMV…YLVV), 705–725 (VILV…FMYL), 733–753 (SFPY…VYAF), 832–852 (TGLV…ITST), and 873–893 (FLLY…LWFL).

This sequence belongs to the chitin synthase family. Class III subfamily.

It localises to the cell membrane. The enzyme catalyses [(1-&gt;4)-N-acetyl-beta-D-glucosaminyl](n) + UDP-N-acetyl-alpha-D-glucosamine = [(1-&gt;4)-N-acetyl-beta-D-glucosaminyl](n+1) + UDP + H(+). In terms of biological role, polymerizes chitin, a structural polymer of the cell wall and septum, by transferring the sugar moiety of UDP-GlcNAc to the non-reducing end of the growing chitin polymer. Plays essential functions in fungal survival and host infection. The polypeptide is Chitin synthase 3B (Gibberella zeae (strain ATCC MYA-4620 / CBS 123657 / FGSC 9075 / NRRL 31084 / PH-1) (Wheat head blight fungus)).